The following is a 498-amino-acid chain: Ribulose bisphosphate carboxylase large chain (498 aa).

Positions 1 to 2 (MS) are excised as a propeptide. An N-acetylproline modification is found at P3. Position 14 is an N6,N6,N6-trimethyllysine (K14). Substrate contacts are provided by N123 and T173. The active-site Proton acceptor is K175. K177 provides a ligand contact to substrate. Residues K201, D203, and E204 each coordinate Mg(2+). At K201 the chain carries N6-carboxylysine. H294 (proton acceptor) is an active-site residue. The substrate site is built by R295, H327, and S379. The disordered stretch occupies residues 473-498 (DTLDPNDKKQRDNEDTLADKFFGDKG).

This sequence belongs to the RuBisCO large chain family. Type I subfamily. In terms of assembly, heterohexadecamer of 8 large chains and 8 small chains; disulfide-linked. The disulfide link is formed within the large subunit homodimers. Mg(2+) is required as a cofactor. The disulfide bond which can form in the large chain dimeric partners within the hexadecamer appears to be associated with oxidative stress and protein turnover.

It is found in the plastid. The enzyme catalyses 2 (2R)-3-phosphoglycerate + 2 H(+) = D-ribulose 1,5-bisphosphate + CO2 + H2O. The catalysed reaction is D-ribulose 1,5-bisphosphate + O2 = 2-phosphoglycolate + (2R)-3-phosphoglycerate + 2 H(+). RuBisCO catalyzes two reactions: the carboxylation of D-ribulose 1,5-bisphosphate, the primary event in carbon dioxide fixation, as well as the oxidative fragmentation of the pentose substrate in the photorespiration process. Both reactions occur simultaneously and in competition at the same active site. This chain is Ribulose bisphosphate carboxylase large chain, found in Cuscuta exaltata (Tall dodder).